A 184-amino-acid polypeptide reads, in one-letter code: Photosystem I assembly protein Ycf4 (184 aa).

A run of 2 helical transmembrane segments spans residues 21 to 43 and 58 to 80; these read NFCW…FSSY and LFIP…SFYL.

This sequence belongs to the Ycf4 family.

Its subcellular location is the plastid. The protein resides in the chloroplast thylakoid membrane. Functionally, seems to be required for the assembly of the photosystem I complex. This is Photosystem I assembly protein Ycf4 from Marchantia polymorpha (Common liverwort).